A 189-amino-acid chain; its full sequence is Dynactin subunit 6 (189 aa).

It belongs to the dynactin subunits 5/6 family. Dynactin subunit 6 subfamily. Subunit of dynactin, a multiprotein complex part of a tripartite complex with dynein and a adapter, such as BICDL1, BICD2 or HOOK3. The dynactin complex is built around ACTR1A/ACTB filament and consists of an actin-related filament composed of a shoulder domain, a pointed end and a barbed end.

The protein resides in the cytoplasm. Its subcellular location is the cytoskeleton. Its function is as follows. Part of the dynactin complex that activates the molecular motor dynein for ultra-processive transport along microtubules. The sequence is that of Dynactin subunit 6 (dynF) from Dictyostelium discoideum (Social amoeba).